The following is a 307-amino-acid chain: NAD kinase (307 aa).

Aspartate 78 acts as the Proton acceptor in catalysis. NAD(+)-binding positions include 78–79 (DG), histidine 83, 154–155 (NE), arginine 165, arginine 182, aspartate 184, and glutamine 255.

The protein belongs to the NAD kinase family. Requires a divalent metal cation as cofactor.

It is found in the cytoplasm. It carries out the reaction NAD(+) + ATP = ADP + NADP(+) + H(+). Functionally, involved in the regulation of the intracellular balance of NAD and NADP, and is a key enzyme in the biosynthesis of NADP. Catalyzes specifically the phosphorylation on 2'-hydroxyl of the adenosine moiety of NAD to yield NADP. The polypeptide is NAD kinase (Halorhodospira halophila (strain DSM 244 / SL1) (Ectothiorhodospira halophila (strain DSM 244 / SL1))).